We begin with the raw amino-acid sequence, 117 residues long: Hydrogenase maturation factor HypA (117 aa).

Histidine 2 is a Ni(2+) binding site. Residues cysteine 73, cysteine 76, cysteine 89, and cysteine 92 each contribute to the Zn(2+) site.

Belongs to the HypA/HybF family.

Its function is as follows. Involved in the maturation of [NiFe] hydrogenases. Required for nickel insertion into the metal center of the hydrogenase. In Shewanella baltica (strain OS223), this protein is Hydrogenase maturation factor HypA.